Here is a 427-residue protein sequence, read N- to C-terminus: 3-phosphoshikimate 1-carboxyvinyltransferase (427 aa).

The 3-phosphoshikimate site is built by K22, S23, and R27. A phosphoenolpyruvate-binding site is contributed by K22. Positions 96 and 124 each coordinate phosphoenolpyruvate. Positions 169, 170, 171, 197, 313, 336, and 340 each coordinate 3-phosphoshikimate. A phosphoenolpyruvate-binding site is contributed by Q171. The Proton acceptor role is filled by D313. Phosphoenolpyruvate-binding residues include R344, R386, and K411.

The protein belongs to the EPSP synthase family. As to quaternary structure, monomer.

It localises to the cytoplasm. The enzyme catalyses 3-phosphoshikimate + phosphoenolpyruvate = 5-O-(1-carboxyvinyl)-3-phosphoshikimate + phosphate. It participates in metabolic intermediate biosynthesis; chorismate biosynthesis; chorismate from D-erythrose 4-phosphate and phosphoenolpyruvate: step 6/7. Its function is as follows. Catalyzes the transfer of the enolpyruvyl moiety of phosphoenolpyruvate (PEP) to the 5-hydroxyl of shikimate-3-phosphate (S3P) to produce enolpyruvyl shikimate-3-phosphate and inorganic phosphate. The sequence is that of 3-phosphoshikimate 1-carboxyvinyltransferase from Shigella sonnei.